Consider the following 112-residue polypeptide: ATP-dependent Clp protease adapter protein ClpS (112 aa).

The protein belongs to the ClpS family. Binds to the N-terminal domain of the chaperone ClpA.

Its function is as follows. Involved in the modulation of the specificity of the ClpAP-mediated ATP-dependent protein degradation. The protein is ATP-dependent Clp protease adapter protein ClpS of Rhodococcus jostii (strain RHA1).